Here is a 52-residue protein sequence, read N- to C-terminus: MSLWLIYVLLLFWCAFNFCTVICNYCVPSVNFYYYSVRWMGLNFYLLCLLFA.

This is an uncharacterized protein from Bos taurus papillomavirus 4 (Bovine papillomavirus 4).